The chain runs to 33 residues: Photosystem II reaction center protein Psb30 (33 aa).

A helical transmembrane segment spans residues 5–25; sequence VIAQLIALALIVGSGPLVIAL.

Belongs to the Psb30/Ycf12 family. PSII is composed of 1 copy each of membrane proteins PsbA, PsbB, PsbC, PsbD, PsbE, PsbF, PsbH, PsbI, PsbJ, PsbK, PsbL, PsbM, PsbT, PsbX, PsbY, PsbZ, Psb30/Ycf12, peripheral proteins of the oxygen-evolving complex and a large number of cofactors. It forms dimeric complexes.

It localises to the plastid. The protein localises to the chloroplast thylakoid membrane. Its function is as follows. A core subunit of photosystem II (PSII), probably helps stabilize the reaction center. The protein is Photosystem II reaction center protein Psb30 of Physcomitrium patens (Spreading-leaved earth moss).